Consider the following 447-residue polypeptide: Na(+)-translocating NADH-quinone reductase subunit A (447 aa).

This sequence belongs to the NqrA family. Composed of six subunits; NqrA, NqrB, NqrC, NqrD, NqrE and NqrF.

It carries out the reaction a ubiquinone + n Na(+)(in) + NADH + H(+) = a ubiquinol + n Na(+)(out) + NAD(+). In terms of biological role, NQR complex catalyzes the reduction of ubiquinone-1 to ubiquinol by two successive reactions, coupled with the transport of Na(+) ions from the cytoplasm to the periplasm. NqrA to NqrE are probably involved in the second step, the conversion of ubisemiquinone to ubiquinol. This chain is Na(+)-translocating NADH-quinone reductase subunit A, found in Neisseria meningitidis serogroup B (strain ATCC BAA-335 / MC58).